Consider the following 498-residue polypeptide: Glycerol kinase (498 aa).

An ADP-binding site is contributed by Thr13. 3 residues coordinate ATP: Thr13, Thr14, and Ser15. Thr13 contributes to the sn-glycerol 3-phosphate binding site. ADP is bound at residue Arg17. Sn-glycerol 3-phosphate is bound by residues Arg83, Glu84, Tyr135, and Asp244. Residues Arg83, Glu84, Tyr135, Asp244, and Gln245 each coordinate glycerol. Thr266 and Gly309 together coordinate ADP. ATP is bound by residues Thr266, Gly309, Gln313, and Gly410. Gly410 and Asn414 together coordinate ADP.

This sequence belongs to the FGGY kinase family. In terms of assembly, homotetramer and homodimer (in equilibrium).

It catalyses the reaction glycerol + ATP = sn-glycerol 3-phosphate + ADP + H(+). Its pathway is polyol metabolism; glycerol degradation via glycerol kinase pathway; sn-glycerol 3-phosphate from glycerol: step 1/1. Its activity is regulated as follows. Activated by phosphorylation and inhibited by fructose 1,6-bisphosphate (FBP). In terms of biological role, key enzyme in the regulation of glycerol uptake and metabolism. Catalyzes the phosphorylation of glycerol to yield sn-glycerol 3-phosphate. This chain is Glycerol kinase, found in Symbiobacterium thermophilum (strain DSM 24528 / JCM 14929 / IAM 14863 / T).